Consider the following 41-residue polypeptide: Augerpeptide-s11a (41 aa).

In terms of processing, contains 4 disulfide bonds. Expressed by the venom duct.

It is found in the secreted. In terms of biological role, does not elicit any observable symptomatology in C.elegans. This Terebra subulata (Chocolate spotted auger) protein is Augerpeptide-s11a.